We begin with the raw amino-acid sequence, 66 residues long: Dermaseptin PD-3-7 (66 aa).

A signal peptide spans 1–22 (MSFMKKSLLLVLFLGVVSLSNC). Positions 23–40 (EEEKGENENEDHEEHHEE) are excised as a propeptide.

Expressed by the skin glands.

It is found in the secreted. Its function is as follows. Possesses a potent antimicrobial activity against Gram-positive and Gram-negative bacteria. Probably acts by disturbing membrane functions with its amphipathic structure. This Agalychnis dacnicolor (Giant Mexican leaf frog) protein is Dermaseptin PD-3-7.